The primary structure comprises 3546 residues: MCENCADLVEVLNEISDVEGGDGLQLRKEHTLKIFTYINSWTQRQCLCCFKEYKHLEIFNQVVCALINLVIAQVQVLRDQLCKHCTTINIDSTWQDESNQAEEPLNIDRECNEGSTERQKSIEKKSNSTRICNLTEEESSKSSDPFSLWSTDEKEKLLLCVAKIFQIQFPLYTAYKHNTHPTIEDISTQESNILGAFCDMNDVEVPLHLLRYVCLFCGKNGLSLMKDCFEYGTPETLPFLIAHAFITVVSNIRIWLHIPAVMQHIIPFRTYVIRYLCKLSDQELRQSAARNMADLMWSTVKEPLDTTLCFDKESLDLAFKYFMSPTLTMRLAGLSQITNQLHTFNDVCNNESLVSDTETSIAKELADWLISNNVVEHIFGPNLHIEIIKQCQVILNFLAAEGRLSTQHIDCIWAAAQLKHCSRYIHDLFPSLIKNLDPVPLRHLLNLVSALEPSVHTEQTLYLASMLIKALWNNALAAKAQLSKQSSFASLLNTNIPIGNKKEEEELRRTAPSPWSPAASPQSSDNSDTHQSGGSDIEMDEQLINRTKHVQQRLSDTEESMQGSSDETANSGEDGSSGPGSSSGHSDGSSNEVNSSHASQSAGSPGSEVQSEDIADIEALKEEDEDDDHGHNPPKSSCGTDLRNRKLESQAGICLGDSQGMSERNGTSSGTGKDLVFNTESLPSVDNRMRMLDACSHSEDPEHDISGEMNATHIAQGSQESCITRTGDFLGETIGNELFNCRQFIGPQHHHHHHHHHHHHDGHMVDDMLSADDVSCSSSQVSAKSEKNMADFDGEESGCEEELVQINSHAELTSHLQQHLPNLASIYHEHLSQGPVVHKHQFNSNAVTDINLDNVCKKGNTLLWDIVQDEDAVNLSEGLINEAEKLLCSLVCWFTDRQIRMRFIEGCLENLGNNRSVVISLRLLPKLFGTFQQFGSSYDTHWITMWAEKELNMMKLFFDNLVYYIQTVREGRQKHALYSHSAEVQVRLQFLTCVFSTLGSPDHFRLSLEQVDILWHCLVEDSECYDDALHWFLNQVRSKDQHAMGMETYKHLFLEKMPQLKPETISMTGLNLFQHLCNLARLATSAYDGCSNSELCGMDQFWGIALRAQSGDVSRAAIQYINSYYINGKTGLEKEQEFISKCMESLMIASSSLEQESHSSLMVIERGLLMLKTHLEAFRRRFAYHLRQWQIEGTGISSHLKALSDKQSLPLRVVCQPAGLPDKMTIEMYPSDQVADLRAEVTHWYENLQKEQINQQAQLQEFGQSNRKGEFPGGLMGPVRMISSGHELTTDYDEKALHELGFKDMQMVFVSLGAPRRERKGEGVQLPASCLPPPQKDNIPMLLLLQEPHLTTLFDLLEMLASFKPPSGKVAVDDSESLRCEELHLHAENLSRRVWELLMLLPTCPNMLMAFQNISDEQSNDGFNWKELLKIKSAHKLLYALEIIEALGKPNRRIRRESTGSYSDLYPDSDDSSEDQVENSKNSWSCKFVAAGGLQQLLEIFNSGILEPKEQESWTVWQLDCLACLLKLICQFAVDPSDLDLAYHDVFAWSGIAESHRKRTWPGKSRKAAGDHAKGLHIPRLTEVFLVLVQGTSLIQRLMSVAYTYDNLAPRVLKAQSDHRSRHEVSHYSMWLLVSWAHCCSLVKSSLADSDHLQDWLKKLTLLIPETAVRHESCSGLYKLSLSGLDGGDSINRSFLLLAASTLLKFLPDAQALKPIRIDDYEEEPILKPGCKEYFWLLCKLVDNIHIKDASQTTLLDLDALARHLADCIRSREILDHQDGNVEDDGLTGLLRLATSVVKHKPPFKFSREGQEFLRDIFNLLFLLPSLKDRQQPKCKSHSSRAAAYDLLVEMVKGSVENYRLIHNWVMAQHMQSHAPYKWDYWPHEDVRAECRFVGLTNLGATCYLASTIQQLYMIPEARQAVFTAKYSEDMKHKTTLLELQKMFTYLMESECKAYNPRPFCKTYTMDKQPLNTGEQKDMTEFFTDLITKIEEMSPELKNTVKSLFGGVITNNVVSLDCEHVSQTAEEFYTVRCQVADMKNIYESLDEVTIKDTLEGDNMYTCSHCGKKVRAEKRACFKKLPRILSFNTMRYTFNMVTMMKEKVNTHFSFPLRLDMTPYTEDFLMGKSERKEGFKEVSDHSKDSESYEYDLIGVTVHTGTADGGHYYSFIRDIVNPHAYKNNKWYLFNDAEVKPFDSAQLASECFGGEMTTKTYDSVTDKFMDFSFEKTHSAYMLFYKRMEPEEENGREYKFDVSSELLEWIWHDNMQFLQDKNIFEHTYFGFMWQLCSCIPSTLPDPKAVSLMTAKLSTSFVLETFIHSKEKPTMLQWIELLTKQFNNSQAACEWFLDRMADDDWWPMQILIKCPNQIVRQMFQRLCIHVIQRLRPVHAHLYLQPGMEDGSDDMDTSVEDIGGRSCVTRFVRTLLLIMEHGVKPHSKHLTEYFAFLYEFAKMGEEESQFLLSLQAISTMVHFYMGTKGPENPQVEVLSEEEGEEEEEEEDILSLAEEKYRPAALEKMIALVALLVEQSRSERHLTLSQTDMAALTGGKGFPFLFQHIRDGINIRQTCNLIFSLCRYNNRLAEHIVSMLFTSIAKLTPEAANPFFKLLTMLMEFAGGPPGMPPFASYILQRIWEVIEYNPSQCLDWLAVQTPRNKLAHSWVLQNMENWVERFLLAHNYPRVRTSAAYLLVSLIPSNSFRQMFRSTRSLHIPTRDLPLSPDTTVVLHQVYNVLLGLLSRAKLYVDAAVHGTTKLVPYFSFMTYCLISKTEKLMFSTYFMDLWNLFQPKLSEPAIATNHNKQALLSFWYNVCADCPENIRLIVQNPVVTKNIAFNYILADHDDQDVVLFNRGMLPAYYGILRLCCEQSPAFTRQLASHQNIQWAFKNLTPHASQYPGAVEELFNLMQLFIAQRPDMREEELEDIKQFKKTTISCYLRCLDGRSCWTTLISAFRILLESDEDRLLVVFNRGLILMTESFNTLHMMYHEATACHVTGDLVELLSIFLSVLKSTRPYLQRKDVKQALIQWQERIEFAHKLLTLLNSYSPPELRNACIDVLKELVLLSPHDFLHTLVPFLQHNHCTYHHSNIPMSLGPYFPCRENIKLIGGKSNIRPPRPELNMCLLPTMVETSKGKDDVYDRMLLDYFFSYHQFIHLLCRVAINCEKFTETLVKLSVLVAYEGLPLHLALFPKLWTELCQTQSAMSKNCIKLLCEDPVFAEYIKCILMDERTFLNNNIVYTFMTHFLLKVQSQVFSEANCANLISTLITNLISQYQNLQSDFSNRVEISKASASLNGDLRALALLLSVHTPKQLNPALIPTLQELLSKCRTCLQQRNSLQEQEAKERKTKDDEGATPIKRRRVSSDEEHTVDSCISDMKTETREVLTPTSTSDNETRDSSIIDPGTEQDLPSPENSSVKEYRMEVPSSFSEDMSNIRSQHAEEQSNNGRYDDCKEFKDLHCSKDSTLAEEESEFPSTSISAVLSDLADLRSCDGQALPSQDPEVALSLSCGHSRGLFSHMQQHDILDTLCRTIESTIHVVTRISGKGNQAAS.

Ser352, Ser486, Ser487, and Ser490 each carry phosphoserine. Disordered stretches follow at residues 502–535 (KEEE…SGGS), 550–679 (VQQR…VFNT), and 1459–1478 (TGSY…DQVE). Positions 511-524 (APSPWSPAASPQSS) are enriched in low complexity. Polar residues-rich tracts occupy residues 525-534 (DNSDTHQSGG) and 560-570 (SMQGSSDETAN). The span at 571-590 (SGEDGSSGPGSSSGHSDGSS) shows a compositional bias: low complexity. Positions 591–609 (NEVNSSHASQSAGSPGSEV) are enriched in polar residues. Over residues 610-627 (QSEDIADIEALKEEDEDD) the composition is skewed to acidic residues. Residue Ser649 is modified to Phosphoserine. Residues 659 to 671 (QGMSERNGTSSGT) are compositionally biased toward polar residues. Residues 1467 to 1477 (PDSDDSSEDQV) show a composition bias toward acidic residues. Ser1469 carries the post-translational modification Phosphoserine. A USP domain is found at 1894-2239 (VGLTNLGATC…SAYMLFYKRM (346 aa)). Cys1903 acts as the Nucleophile in catalysis. The active-site Proton acceptor is the His2164. At Ser2488 the chain carries Phosphoserine. The segment at 3331–3443 (NSLQEQEAKE…HAEEQSNNGR (113 aa)) is disordered. A compositionally biased stretch (basic and acidic residues) spans 3336-3347 (QEAKERKTKDDE). Phosphoserine occurs at positions 3358 and 3359. Phosphothreonine is present on Thr3381. 2 positions are modified to phosphoserine: Ser3386 and Ser3406. Polar residues predominate over residues 3421–3432 (SSFSEDMSNIRS). Residues 3433 to 3443 (QHAEEQSNNGR) show a composition bias toward basic and acidic residues. Residue Ser3503 is modified to Phosphoserine.

The protein belongs to the peptidase C19 family. Interacts with AXIN1 and AXIN2. Expressed in brain at low level.

The catalysed reaction is Thiol-dependent hydrolysis of ester, thioester, amide, peptide and isopeptide bonds formed by the C-terminal Gly of ubiquitin (a 76-residue protein attached to proteins as an intracellular targeting signal).. Its function is as follows. Ubiquitin hydrolase that can remove conjugated ubiquitin from AXIN1 and AXIN2, thereby acting as a regulator of Wnt signaling pathway. Acts as an activator of the Wnt signaling pathway downstream of the beta-catenin destruction complex by deubiquitinating and stabilizing AXIN1 and AXIN2, leading to promote nuclear accumulation of AXIN1 and AXIN2 and positively regulate beta-catenin (CTNBB1)-mediated transcription. Recognizes and hydrolyzes the peptide bond at the C-terminal Gly of ubiquitin. Involved in the processing of poly-ubiquitin precursors as well as that of ubiquitinated proteins. In Homo sapiens (Human), this protein is Ubiquitin carboxyl-terminal hydrolase 34 (USP34).